Here is a 172-residue protein sequence, read N- to C-terminus: MDNPRRIIIGIDPGSRITGYGIIWSQGSKQGCIAFGQIKTDNDSLNFRLHQIERELRDLILIHRPHEAAIEQVFTFHNHQSALKLGQARGAALVATAACALSVAEYSARQIKQAVVGYGAATKAQVQHMVHLLLQLEKAPPADAADALAIALCHATSSRLSEKLMQAKGTLT.

Catalysis depends on residues Asp12, Glu71, and Asp143. The Mg(2+) site is built by Asp12, Glu71, and Asp143.

This sequence belongs to the RuvC family. In terms of assembly, homodimer which binds Holliday junction (HJ) DNA. The HJ becomes 2-fold symmetrical on binding to RuvC with unstacked arms; it has a different conformation from HJ DNA in complex with RuvA. In the full resolvosome a probable DNA-RuvA(4)-RuvB(12)-RuvC(2) complex forms which resolves the HJ. Mg(2+) serves as cofactor.

The protein localises to the cytoplasm. The enzyme catalyses Endonucleolytic cleavage at a junction such as a reciprocal single-stranded crossover between two homologous DNA duplexes (Holliday junction).. Functionally, the RuvA-RuvB-RuvC complex processes Holliday junction (HJ) DNA during genetic recombination and DNA repair. Endonuclease that resolves HJ intermediates. Cleaves cruciform DNA by making single-stranded nicks across the HJ at symmetrical positions within the homologous arms, yielding a 5'-phosphate and a 3'-hydroxyl group; requires a central core of homology in the junction. The consensus cleavage sequence is 5'-(A/T)TT(C/G)-3'. Cleavage occurs on the 3'-side of the TT dinucleotide at the point of strand exchange. HJ branch migration catalyzed by RuvA-RuvB allows RuvC to scan DNA until it finds its consensus sequence, where it cleaves and resolves the cruciform DNA. The chain is Crossover junction endodeoxyribonuclease RuvC from Coxiella burnetii (strain CbuG_Q212) (Coxiella burnetii (strain Q212)).